A 206-amino-acid polypeptide reads, in one-letter code: LexA repressor (206 aa).

Positions 29–49 (VREICEAVGLRSTSTVHGHLA) form a DNA-binding region, H-T-H motif. Residues serine 130 and lysine 167 each act as for autocatalytic cleavage activity in the active site.

The protein belongs to the peptidase S24 family. Homodimer.

It carries out the reaction Hydrolysis of Ala-|-Gly bond in repressor LexA.. Represses a number of genes involved in the response to DNA damage (SOS response), including recA and lexA. In the presence of single-stranded DNA, RecA interacts with LexA causing an autocatalytic cleavage which disrupts the DNA-binding part of LexA, leading to derepression of the SOS regulon and eventually DNA repair. The polypeptide is LexA repressor (Alkaliphilus oremlandii (strain OhILAs) (Clostridium oremlandii (strain OhILAs))).